A 1108-amino-acid polypeptide reads, in one-letter code: Retinal guanylyl cyclase 1 (1108 aa).

Positions 1–54 (MSAWLLPAGGLPGAGFCVPARQSPSSFSRVLRWPRPGLPGLLLLLLLPSPSALS) are cleaved as a signal peptide. Residues 55–465 (AVFKVGVLGP…PDVICNGGVE (411 aa)) lie on the Extracellular side of the membrane. Residues Cys108 and Cys136 are joined by a disulfide bond. Asn300 is a glycosylation site (N-linked (GlcNAc...) asparagine). Residues 466 to 490 (PGLVFVGFLLVIGMGLTGAFLAHYL) form a helical membrane-spanning segment. The 321-residue stretch at 491–811 (RHRLLHMQMA…DLTFDLFKSI (321 aa)) folds into the Protein kinase domain. The Cytoplasmic segment spans residues 491–1108 (RHRLLHMQMA…KARPGQFTGK (618 aa)). The 131-residue stretch at 883–1013 (TLYFSDIVGF…DTVNTASRME (131 aa)) folds into the Guanylate cyclase domain. The segment at 1069-1108 (IPKPPDLQPGASNHGISLQEIPPERRKKLEKARPGQFTGK) is disordered.

This sequence belongs to the adenylyl cyclase class-4/guanylyl cyclase family. In terms of assembly, homodimer; requires homodimerization for guanylyl cyclase activity. Interacts (via C-terminus) with RD3 (via C-terminus); promotes the exit of GUCY2E from the endoplasmic reticulum and its trafficking to the photoreceptor outer segments. Interaction with RD3 negatively regulates GUCY2E guanylate cyclase activity. There are 9 conserved cysteine residues in sensory guanylate cyclases, 6 in the extracellular domain, which may be involved in intra- or interchain disulfide bonds.

The protein resides in the photoreceptor outer segment membrane. It localises to the endoplasmic reticulum membrane. The catalysed reaction is GTP = 3',5'-cyclic GMP + diphosphate. Activated by GUCA1A when free calcium ions concentration is low, and inhibited by GUCA1A when free calcium ions concentration is high. Negatively regulated by RD3; RD3 inhibits the basal and GUCA1A-stimulated guanylate cyclase activity. Its function is as follows. Catalyzes the synthesis of cyclic GMP (cGMP) in rods and cones of photoreceptors. Plays an essential role in phototransduction, by mediating cGMP replenishment. May also participate in the trafficking of membrane-asociated proteins to the photoreceptor outer segment membrane. The sequence is that of Retinal guanylyl cyclase 1 (Gucy2e) from Mus musculus (Mouse).